The chain runs to 192 residues: Phosphoheptose isomerase (192 aa).

One can recognise an SIS domain in the interval Leu-37–Lys-192. Asn-52–Gly-54 contacts substrate. Zn(2+) is bound by residues His-61 and Glu-65. Substrate contacts are provided by residues Glu-65, Asn-93–Asp-94, Ser-119–Ser-121, Ser-124, and Gln-172. Gln-172 and His-180 together coordinate Zn(2+).

This sequence belongs to the SIS family. GmhA subfamily. Homotetramer. Zn(2+) is required as a cofactor.

It localises to the cytoplasm. It carries out the reaction 2 D-sedoheptulose 7-phosphate = D-glycero-alpha-D-manno-heptose 7-phosphate + D-glycero-beta-D-manno-heptose 7-phosphate. It participates in carbohydrate biosynthesis; D-glycero-D-manno-heptose 7-phosphate biosynthesis; D-glycero-alpha-D-manno-heptose 7-phosphate and D-glycero-beta-D-manno-heptose 7-phosphate from sedoheptulose 7-phosphate: step 1/1. Its function is as follows. Catalyzes the isomerization of sedoheptulose 7-phosphate in D-glycero-D-manno-heptose 7-phosphate. The chain is Phosphoheptose isomerase from Escherichia coli O7:K1 (strain IAI39 / ExPEC).